Consider the following 228-residue polypeptide: Protein LIAT1 (228 aa).

Residues 1 to 108 (MAGRGGTGAA…RAEPRDKEEN (108 aa)) form a disordered region. Acidic residues predominate over residues 12 to 24 (YGEEGEEEEEEEA). Residues 49–71 (KRKVKKKKKKKKTKGSGKGDADK) are lysine-rich domain. A compositionally biased stretch (basic residues) spans 50 to 63 (RKVKKKKKKKKTKG). Basic and acidic residues predominate over residues 90-108 (LNPHKDHGLRAEPRDKEEN). The tract at residues 113-165 (PYSYSINHPCFAEIEDTLSSQINESLRWDGILTDPEAEKERIRIYKLNRRKRY) is interaction with ATE1. Repeat unit 1 spans residues 169–178 (ALKCFHSDPC).

In terms of assembly, self-associates (via Lys-rich domain); targets LIAT1 to the nucleolus. Interacts with ATE1; it is not a substrate of ATE1, the interaction takes place in the cytoplasm and seems to increase ATE1 arginyltransferase activity. Interacts with JMJD6 and MRPS14. Post-translationally modified by JMJD6 lysyl-hydroxylase activity at its Lys-rich domain, which inhibits its self-association and nucleolar localization. Highly expressed in spleen, thymus, liver and brown adipose tissue. Moderately expressed in liver, testis and lung.

It is found in the nucleus. It localises to the nucleolus. Its subcellular location is the cytoplasm. Functionally, participates in nucleolar liquid-liquid phase separation (LLPS) through its N-terminal intrinsically disordered region (IDR). May be involved in ATE1-mediated N-terminal arginylation. This Mus musculus (Mouse) protein is Protein LIAT1.